The primary structure comprises 337 residues: tRNA N6-adenosine threonylcarbamoyltransferase (337 aa).

Fe cation is bound by residues H111 and H115. Substrate contacts are provided by residues 134 to 138 (LVSGG), D167, G180, and N272. D300 contributes to the Fe cation binding site.

The protein belongs to the KAE1 / TsaD family. It depends on Fe(2+) as a cofactor.

The protein localises to the cytoplasm. It carries out the reaction L-threonylcarbamoyladenylate + adenosine(37) in tRNA = N(6)-L-threonylcarbamoyladenosine(37) in tRNA + AMP + H(+). In terms of biological role, required for the formation of a threonylcarbamoyl group on adenosine at position 37 (t(6)A37) in tRNAs that read codons beginning with adenine. Is involved in the transfer of the threonylcarbamoyl moiety of threonylcarbamoyl-AMP (TC-AMP) to the N6 group of A37, together with TsaE and TsaB. TsaD likely plays a direct catalytic role in this reaction. The protein is tRNA N6-adenosine threonylcarbamoyltransferase of Escherichia coli O45:K1 (strain S88 / ExPEC).